Here is a 129-residue protein sequence, read N- to C-terminus: Cocaine- and amphetamine-regulated transcript protein (129 aa).

An N-terminal signal peptide occupies residues 1–27; it reads MESSRLRLLPLLGAALLLLLPLLGARA. Tyrosine 41 carries the post-translational modification Phosphotyrosine. Serine 48 carries the phosphoserine modification. Disulfide bonds link cysteine 95-cysteine 113, cysteine 101-cysteine 121, and cysteine 115-cysteine 128.

The protein belongs to the CART family.

The protein localises to the secreted. In terms of biological role, satiety factor closely associated with the actions of leptin and neuropeptide y; this anorectic peptide inhibits both normal and starvation-induced feeding and completely blocks the feeding response induced by neuropeptide Y and regulated by leptin in the hypothalamus. The sequence is that of Cocaine- and amphetamine-regulated transcript protein (Cartpt) from Mus musculus (Mouse).